A 131-amino-acid chain; its full sequence is Cell cycle protein GpsB (131 aa).

Positions 39 to 76 (LDGIIRDYEAFTNEIDRLKEENTKLFSRVDELTKQLSV) form a coiled coil. The tract at residues 111–131 (KLSDSSVDNHDDGNHSDVDQY) is disordered. Residues 117 to 131 (VDNHDDGNHSDVDQY) are compositionally biased toward basic and acidic residues.

This sequence belongs to the GpsB family. As to quaternary structure, forms polymers through the coiled coil domains. Interacts with PBP1, MreC and EzrA.

It localises to the cytoplasm. Divisome component that associates with the complex late in its assembly, after the Z-ring is formed, and is dependent on DivIC and PBP2B for its recruitment to the divisome. Together with EzrA, is a key component of the system that regulates PBP1 localization during cell cycle progression. Its main role could be the removal of PBP1 from the cell pole after pole maturation is completed. Also contributes to the recruitment of PBP1 to the division complex. Not essential for septum formation. The protein is Cell cycle protein GpsB of Lacticaseibacillus casei (strain BL23) (Lactobacillus casei).